A 768-amino-acid polypeptide reads, in one-letter code: U-box domain-containing protein 45 (768 aa).

In terms of domain architecture, U-box spans 278-352 (VPPEELRCPI…SSWCEQNGVQ (75 aa)). ARM repeat units lie at residues 454 to 497 (EEAR…NLAV), 500 to 540 (NRNK…CLEE), 542 to 579 (KPVI…HLST), 581 to 620 (PPNI…NLVL), and 623 to 662 (AGKD…ILCN).

Binds to SD129.

It carries out the reaction S-ubiquitinyl-[E2 ubiquitin-conjugating enzyme]-L-cysteine + [acceptor protein]-L-lysine = [E2 ubiquitin-conjugating enzyme]-L-cysteine + N(6)-ubiquitinyl-[acceptor protein]-L-lysine.. The protein operates within protein modification; protein ubiquitination. Functions as an E3 ubiquitin ligase. This is U-box domain-containing protein 45 (PUB45) from Arabidopsis thaliana (Mouse-ear cress).